A 963-amino-acid polypeptide reads, in one-letter code: MLPYNVRNAGGGSVGGILRRTGQGSGTGSTILGNGNSPGALGAGKVSSSLENHRQPPLELLVFGYACKIFRDDEKAREMDHGKQLIPWMGDVNLKIDRYDVRGALCELAPHEAPPGGYGNRLEYLSAEEQRAEQLCEEERYLFLYNNEEELRLRQEEDLKRLQQETSGGCFSQVGFQYDGQSAASTSIGGSSTATSQLSPNSEESELPFVLPYTLMMAPPLDMQLPETMKQHAIIEKTARFIATQGAQMEILIKAKQANNTQFDFLTQGGHLQPYYRHLLAAIKAAKFPPAPQTPLDQQNTDKEAPSADDHSEEVAGGRRNPNQVVITVPTIKYKPSANCAYTQLISKIKGVPLQAVLQEDESSNPGNSQHSGGTASPALSCRSEGHNSQGGEFTPVLLQYNGSTFTHEEESSNREQQDDNDVNGGEPPQVELLKNTSALALAQNYSSESEEEEDQVQPEKEEEKKPEPVLTFPVPKDSLRHIIDKTATYVIKNGRQFEETLRTKSVDRFSFLLPANEYYPYYLYKVTGDVDAASKEEKTRKAAAVAAALMSKKGLSFGGAAAAVSGSNLDKAPVSFSIRARDDQCPLQHTLPQEASDEETSSNAAGVEHVRPGMPDSVQRAIKQVETQLLARTAGQKGNITASPSCSSPQKEQRQAEERVKDKLAQIAREKLNGMISREKQLQLERKRKALAFLNQIKGEGAIVGSAVPVVGPNPPESAAGAATADSGDESGDSVRSIPITYFGPDDDDEVGEQRPEMRLIGSTQKDEEDDDEEDGGDLEKYNLLNDDSTNTFTSKPVLPPTAAPPPAAVLLSDDDDVQLVATTSTRSSSSRHLKTHRRSRSRSKNVRSSDSSPSSRESSRRRRQKSSRLSREPSSNPPRKSQHSSTQRKKTPKKRRRSKSRSRSKSIRRSRSISILRNNRRSRSRSPSCRNAEQRRQQDRRRTPTKKSHKRHKRRRRSSSP.

An SURP motif 1 repeat occupies 234-276 (IIEKTARFIATQGAQMEILIKAKQANNTQFDFLTQGGHLQPYY). Disordered stretches follow at residues 290 to 322 (PAPQ…RRNP) and 360 to 430 (EDES…EPPQ). Residues 300–317 (NTDKEAPSADDHSEEVAG) show a composition bias toward basic and acidic residues. Residues 364–375 (SNPGNSQHSGGT) are compositionally biased toward polar residues. The segment covering 407-418 (THEEESSNREQQ) has biased composition (basic and acidic residues). Phosphoserine occurs at positions 438, 447, 448, and 450. Residues 445–470 (NYSSESEEEEDQVQPEKEEEKKPEPV) form a disordered region. Residues 458–468 (QPEKEEEKKPE) show a composition bias toward basic and acidic residues. Residues 483–523 (IIDKTATYVIKNGRQFEETLRTKSVDRFSFLLPANEYYPYY) form an SURP motif 2 repeat. Disordered regions lie at residues 593–613 (PQEA…HVRP), 634–662 (TAGQ…ERVK), and 716–963 (PPES…SSSP). Polar residues predominate over residues 637 to 651 (QKGNITASPSCSSPQ). S649 carries the post-translational modification Phosphoserine. Over residues 652-662 (KEQRQAEERVK) the composition is skewed to basic and acidic residues. The segment covering 718–727 (ESAAGAATAD) has biased composition (low complexity). Residues 768–778 (DEEDDDEEDGG) are compositionally biased toward acidic residues. Over residues 787–796 (NDDSTNTFTS) the composition is skewed to polar residues. The span at 799–809 (VLPPTAAPPPA) shows a compositional bias: pro residues. The segment covering 820 to 830 (QLVATTSTRSS) has biased composition (low complexity). Basic residues predominate over residues 831-847 (SSRHLKTHRRSRSRSKN). Low complexity predominate over residues 848–858 (VRSSDSSPSSR). 2 stretches are compositionally biased toward basic residues: residues 861 to 870 (SRRRRQKSSR) and 882 to 913 (KSQH…RRSR). S912, S914, and S916 each carry phosphoserine. Basic and acidic residues predominate over residues 934 to 944 (AEQRRQQDRRR). A compositionally biased stretch (basic residues) spans 945-963 (TPTKKSHKRHKRRRRSSSP).

The protein resides in the nucleus speckle. In terms of biological role, regulator of pre-mRNA splicing (and, possibly, of other RNA processing events). Regulates its own expression at the level of RNA processing. This chain is Protein suppressor of white apricot (su(w[a])), found in Drosophila melanogaster (Fruit fly).